Here is a 261-residue protein sequence, read N- to C-terminus: Mlc titration factor A (261 aa).

The Zn(2+) site is built by His111, His148, His152, and Glu211.

Belongs to the MtfA family. As to quaternary structure, interacts with Mlc. Zn(2+) serves as cofactor.

Its subcellular location is the cytoplasm. Functionally, involved in the modulation of the activity of the glucose-phosphotransferase system (glucose-PTS). Interacts with the transcriptional repressor Mlc, preventing its interaction with DNA and leading to the modulation of expression of genes regulated by Mlc, including ptsG, which encodes the PTS system glucose-specific EIICB component. Its function is as follows. Shows zinc-dependent metallopeptidase activity. In Edwardsiella ictaluri (strain 93-146), this protein is Mlc titration factor A.